The following is a 205-amino-acid chain: Small ribosomal subunit protein uS5 (205 aa).

An S5 DRBM domain is found at 49–112 (LVDEVLDINM…VSAKINLVKV (64 aa)).

This sequence belongs to the universal ribosomal protein uS5 family. Part of the 30S ribosomal subunit. Contacts protein S4.

With S4 and S12 plays an important role in translational accuracy. The polypeptide is Small ribosomal subunit protein uS5 (Methanospirillum hungatei JF-1 (strain ATCC 27890 / DSM 864 / NBRC 100397 / JF-1)).